A 92-amino-acid chain; its full sequence is C-C motif chemokine 4 (92 aa).

Residues 1 to 23 form the signal peptide; the sequence is MKLCVSALSLLLLVAAFCAPGFS. 2 cysteine pairs are disulfide-bonded: C34–C58 and C35–C74.

Belongs to the intercrine beta (chemokine CC) family. Homodimer.

The protein localises to the secreted. Functionally, monokine with inflammatory and chemokinetic properties. This Mus musculus (Mouse) protein is C-C motif chemokine 4 (Ccl4).